The sequence spans 155 residues: Ribonuclease H (155 aa).

In terms of domain architecture, RNase H type-1 spans 1 to 142 (MLKQVEIFTD…CDELARAAAM (142 aa)). Residues aspartate 10, glutamate 48, aspartate 70, and aspartate 134 each contribute to the Mg(2+) site.

It belongs to the RNase H family. In terms of assembly, monomer. Mg(2+) is required as a cofactor.

Its subcellular location is the cytoplasm. The catalysed reaction is Endonucleolytic cleavage to 5'-phosphomonoester.. Its function is as follows. Endonuclease that specifically degrades the RNA of RNA-DNA hybrids. The sequence is that of Ribonuclease H from Citrobacter koseri (strain ATCC BAA-895 / CDC 4225-83 / SGSC4696).